The following is a 183-amino-acid chain: Large ribosomal subunit protein uL5 (183 aa).

The protein belongs to the universal ribosomal protein uL5 family. As to quaternary structure, part of the 50S ribosomal subunit; part of the 5S rRNA/L5/L18/L25 subcomplex. Contacts the 5S rRNA and the P site tRNA. Forms a bridge to the 30S subunit in the 70S ribosome.

This is one of the proteins that bind and probably mediate the attachment of the 5S RNA into the large ribosomal subunit, where it forms part of the central protuberance. In the 70S ribosome it contacts protein S13 of the 30S subunit (bridge B1b), connecting the 2 subunits; this bridge is implicated in subunit movement. Contacts the P site tRNA; the 5S rRNA and some of its associated proteins might help stabilize positioning of ribosome-bound tRNAs. The chain is Large ribosomal subunit protein uL5 from Tropheryma whipplei (strain TW08/27) (Whipple's bacillus).